Reading from the N-terminus, the 87-residue chain is Protein U62 (87 aa).

Belongs to the herpesviridae UL91 family.

The polypeptide is Protein U62 (U62) (Human herpesvirus 6B (strain Z29) (HHV-6 variant B)).